Here is a 473-residue protein sequence, read N- to C-terminus: Inactive levansucrase (473 aa).

The first 29 residues, 1–29 (MNIKKFAKQATVLTFTTALLAGGATQAFA), serve as a signal peptide directing secretion.

Belongs to the glycosyl hydrolase 68 family.

It is found in the secreted. The polypeptide is Inactive levansucrase (sacB) (Geobacillus stearothermophilus (Bacillus stearothermophilus)).